Reading from the N-terminus, the 207-residue chain is MPLPDFRFIRLLPLAALVLTACSVTTPKGPGKSPDSPQWRQHQQDVRNLNQYQTRGAFAYISDQQKVYARFFWQQTGQDRYRLLLTNPLGSTELELNAQPGNVQLVDNKGQRYTSDDAEEMIGKLTGMPIPLNSLRQWILGLPGDATDYKLDDQYRLSEITYSQNGKNWKVVYGGYDTKTQPAMPANMELTDGGQRIKLKMDNWIVK.

The first 21 residues, 1 to 21 (MPLPDFRFIRLLPLAALVLTA), serve as a signal peptide directing secretion. Cysteine 22 carries N-palmitoyl cysteine lipidation. A lipid anchor (S-diacylglycerol cysteine) is attached at cysteine 22.

The protein belongs to the LolB family. As to quaternary structure, monomer.

The protein localises to the cell outer membrane. Functionally, plays a critical role in the incorporation of lipoproteins in the outer membrane after they are released by the LolA protein. The sequence is that of Outer-membrane lipoprotein LolB from Escherichia coli O6:K15:H31 (strain 536 / UPEC).